A 335-amino-acid chain; its full sequence is Acetyl-coenzyme A carboxylase carboxyl transferase subunit alpha (335 aa).

One can recognise a CoA carboxyltransferase C-terminal domain in the interval 48–308; it reads TLEKKVDALR…KGMLIEELKA (261 aa).

This sequence belongs to the AccA family. In terms of assembly, acetyl-CoA carboxylase is a heterohexamer composed of biotin carboxyl carrier protein (AccB), biotin carboxylase (AccC) and two subunits each of ACCase subunit alpha (AccA) and ACCase subunit beta (AccD).

It is found in the cytoplasm. The enzyme catalyses N(6)-carboxybiotinyl-L-lysyl-[protein] + acetyl-CoA = N(6)-biotinyl-L-lysyl-[protein] + malonyl-CoA. It participates in lipid metabolism; malonyl-CoA biosynthesis; malonyl-CoA from acetyl-CoA: step 1/1. In terms of biological role, component of the acetyl coenzyme A carboxylase (ACC) complex. First, biotin carboxylase catalyzes the carboxylation of biotin on its carrier protein (BCCP) and then the CO(2) group is transferred by the carboxyltransferase to acetyl-CoA to form malonyl-CoA. In Chlorobium luteolum (strain DSM 273 / BCRC 81028 / 2530) (Pelodictyon luteolum), this protein is Acetyl-coenzyme A carboxylase carboxyl transferase subunit alpha.